A 475-amino-acid chain; its full sequence is Bifunctional purple acid phosphatase 26 (475 aa).

Residues 1–30 (MNHLVIISVFLSSVLLLYRGESGITSSFIR) form the signal peptide. Asn-103 carries an N-linked (GlcNAc...) asparagine glycan. 3 residues coordinate Fe cation: Asp-162, Asp-189, and Tyr-192. Residue Asp-189 participates in Zn(2+) binding. Zn(2+) is bound by residues Asn-227 and His-312. Residue Asn-227 coordinates substrate. His-322 functions as the Proton donor in the catalytic mechanism. His-349 is a binding site for Zn(2+). 349–351 (HVH) lines the substrate pocket. His-351 is a Fe cation binding site. N-linked (GlcNAc...) asparagine glycans are attached at residues Asn-365 and Asn-422.

It belongs to the metallophosphoesterase superfamily. Purple acid phosphatase family. As to quaternary structure, homodimer. It depends on Fe cation as a cofactor. Zn(2+) serves as cofactor. Glycosylated. Expressed in roots, stems, leaves, flowers and siliques.

It localises to the vacuole. The enzyme catalyses a phosphate monoester + H2O = an alcohol + phosphate. It carries out the reaction 2 a phenolic donor + H2O2 = 2 a phenolic radical donor + 2 H2O. With respect to regulation, activated by Mg(2+), Co(2+), Mn(2+) and Ba(2+). Inhibited by Fe(2+), Cu(2+), Zn(2+), NaF, molybdate, arsenate, vanadate and inorganic phosphate. No effect of tartrate, Asp, Gln, glutathione, Asn, ascorbic acid and phosphite. Its function is as follows. Metallo-phosphoesterase involved in phosphate metabolism. Acid phosphatase activity with phosphoenolpyruvate, inorganic pyrophosphate, phenyl-phosphate and p-nitrophenyl-phosphate as the most effective substrates. No activity with phytic acid, phosphocholine or bis-p-nitrophenyl-phosphate. Has a peroxidase activity at alkaline pH. The polypeptide is Bifunctional purple acid phosphatase 26 (PAP26) (Arabidopsis thaliana (Mouse-ear cress)).